The primary structure comprises 382 residues: Gap junction alpha-1 protein (382 aa).

Residues 2-23 (GDWSALGKLLDKVQAYSTAGGK) are Cytoplasmic-facing. At serine 5 the chain carries Phosphoserine. Residues 24–44 (VWLSVLFIFRILLLGTAVESA) traverse the membrane as a helical segment. The Extracellular segment spans residues 45–76 (WGDEQSAFRCNTQQPGCENVCYDKSFPISHVR). Cystine bridges form between cysteine 54-cysteine 192 and cysteine 187-cysteine 198. The chain crosses the membrane as a helical span at residues 77–97 (FWVLQIIFVSVPTLLYLAHVF). At 98 to 155 (YVMRKEEKLNKKEEELKVAQTDGVNVDMHLKQIEIKKFKYGIEEHGKVKMRGGLLRTY) the chain is on the cytoplasmic side. Lysine 144 is covalently cross-linked (Glycyl lysine isopeptide (Lys-Gly) (interchain with G-Cter in SUMO)). A helical membrane pass occupies residues 156–176 (IISILFKSIFEVAFLLIQWYI). Residues 177–207 (YGFSLSAVYTCKRDPCPHQVDCFLSRPTEKT) are Extracellular-facing. Residues 208 to 228 (IFIIFMLVVSLVSLALNIIEL) traverse the membrane as a helical segment. Over 229-382 (FYVFFKGVKD…SRPRPDDLEI (154 aa)) the chain is Cytoplasmic. A Glycyl lysine isopeptide (Lys-Gly) (interchain with G-Cter in SUMO) cross-link involves residue lysine 237. The interval 244–382 (SDPYHATSGA…SRPRPDDLEI (139 aa)) is interaction with NOV. Residue tyrosine 247 is modified to Phosphotyrosine. Phosphoserine occurs at positions 255 and 262. Positions 264 to 382 (KYAYFNGCSS…SRPRPDDLEI (119 aa)) are interaction with UBQLN4. Cysteine 271 is modified (S-nitrosocysteine). The residue at position 275 (threonine 275) is a Phosphothreonine. Residues serine 306 and serine 314 each carry the phosphoserine modification. Over residues 317 to 332 (QNRMGQAGSTISNSHA) the composition is skewed to polar residues. The segment at 317 to 382 (QNRMGQAGST…SRPRPDDLEI (66 aa)) is disordered. Serine 325 is subject to Phosphoserine; by CK1. The residue at position 326 (threonine 326) is a Phosphothreonine. Phosphoserine; by CK1 occurs at positions 328 and 330. Phosphoserine is present on residues serine 344 and serine 365. A compositionally biased stretch (low complexity) spans 362-374 (RPSSRASSRASSR). Position 368 is a phosphoserine; by PKC/PRKCG and PKC/PRKCD (serine 368). A phosphoserine mark is found at serine 369 and serine 373.

It belongs to the connexin family. Alpha-type (group II) subfamily. A connexon is composed of a hexamer of connexins. Interacts (via C-terminus) with TJP1. Interacts (via C-terminus) with SRC (via SH3 domain). Interacts (not ubiquitinated) with UBQLN4 (via UBA domain). Interacts with SGSM3 and CNST. Interacts with RIC1/CIP150. Interacts with CSNK1D. Interacts with NOV. Interacts with TMEM65. Interacts with ANK3/ANKG and PKP2. Phosphorylated at Ser-368 by PRKCG; phosphorylation induces disassembly of gap junction plaques and inhibition of gap junction activity. Phosphorylation at Ser-325, Ser-328 and Ser-330 by CK1 modulates gap junction assembly. Phosphorylation at Ser-368 by PRKCD triggers its internalization into small vesicles leading to proteasome-mediated degradation. Post-translationally, sumoylated with SUMO1, SUMO2 and SUMO3, which may regulate the level of functional Cx43 gap junctions at the plasma membrane. May be desumoylated by SENP1 or SENP2. In terms of processing, S-nitrosylation at Cys-271 is enriched at the muscle endothelial gap junction in arteries, it augments channel permeability and may regulate of smooth muscle cell to endothelial cell communication. Acetylated in the developing cortex; leading to delocalization from the cell membrane. As to expression, expressed at intercalated disks in the heart (at protein level). Expressed in the fetal cochlea.

The protein localises to the cell membrane. The protein resides in the cell junction. It is found in the gap junction. Its subcellular location is the endoplasmic reticulum. Its function is as follows. Gap junction protein that acts as a regulator of bladder capacity. A gap junction consists of a cluster of closely packed pairs of transmembrane channels, the connexons, through which materials of low MW diffuse from one cell to a neighboring cell. May play a critical role in the physiology of hearing by participating in the recycling of potassium to the cochlear endolymph. Negative regulator of bladder functional capacity: acts by enhancing intercellular electrical and chemical transmission, thus sensitizing bladder muscles to cholinergic neural stimuli and causing them to contract. May play a role in cell growth inhibition through the regulation of NOV expression and localization. Plays an essential role in gap junction communication in the ventricles. The polypeptide is Gap junction alpha-1 protein (GJA1) (Homo sapiens (Human)).